A 201-amino-acid polypeptide reads, in one-letter code: MAWMLLLILIMVYPGSCALWVSQPPEIRTLEGSSAFLPCSFNASQGRLAIGSVTWFRDEVAPGKEVRNGTPEFRGRLAPLSSSRFLRDHQAELHIWDVRGHDAGIYVCRVEVLGLGVGTGNGTRLVVEKEYPQLGAGTVLLLRAGFYAVSFLSVAMGSTLYYQGKCLTWKGPRRQLPAVVPGPLPPPCGSSAHLLPPVPGG.

A signal peptide spans 1–18 (MAWMLLLILIMVYPGSCA). Residues 19–126 (LWVSQPPEIR…VGTGNGTRLV (108 aa)) enclose the Ig-like domain. Over 19 to 133 (LWVSQPPEIR…RLVVEKEYPQ (115 aa)) the chain is Extracellular. A disulfide bridge connects residues cysteine 39 and cysteine 108. N-linked (GlcNAc...) asparagine glycosylation is found at asparagine 42 and asparagine 121. Residues 134 to 154 (LGAGTVLLLRAGFYAVSFLSV) traverse the membrane as a helical segment. Over 155–201 (AMGSTLYYQGKCLTWKGPRRQLPAVVPGPLPPPCGSSAHLLPPVPGG) the chain is Cytoplasmic.

It belongs to the natural cytotoxicity receptor (NCR) family. Homodimer in the unliganted form. Interacts with CD3Z. Interacts with and is activated by binding to NCR3LG1. Interacts with and is activated by binding to BAG6. Interacts with and is inhibited by binding to LGALS3.

The protein resides in the cell membrane. Cell membrane receptor of natural killer/NK cells that is activated by binding of extracellular ligands including BAG6 and NCR3LG1. Stimulates NK cells cytotoxicity toward neighboring cells producing these ligands. It controls, for instance, NK cells cytotoxicity against tumor cells. Engagement of NCR3 by BAG6 also promotes myeloid dendritic cells (DC) maturation, both through killing DCs that did not acquire a mature phenotype, and inducing the release by NK cells of TNFA and IFNG that promote DC maturation. The chain is Natural cytotoxicity triggering receptor 3 (NCR3) from Macaca mulatta (Rhesus macaque).